Here is a 334-residue protein sequence, read N- to C-terminus: Beta-hexosaminidase (334 aa).

Substrate contacts are provided by residues aspartate 62, arginine 70, arginine 131, and 161-162 (KH). Histidine 174 functions as the Proton donor/acceptor in the catalytic mechanism. The active-site Nucleophile is the aspartate 246.

The protein belongs to the glycosyl hydrolase 3 family. NagZ subfamily.

Its subcellular location is the cytoplasm. The catalysed reaction is Hydrolysis of terminal non-reducing N-acetyl-D-hexosamine residues in N-acetyl-beta-D-hexosaminides.. Its pathway is cell wall biogenesis; peptidoglycan recycling. Functionally, plays a role in peptidoglycan recycling by cleaving the terminal beta-1,4-linked N-acetylglucosamine (GlcNAc) from peptide-linked peptidoglycan fragments, giving rise to free GlcNAc, anhydro-N-acetylmuramic acid and anhydro-N-acetylmuramic acid-linked peptides. The protein is Beta-hexosaminidase of Tolumonas auensis (strain DSM 9187 / NBRC 110442 / TA 4).